We begin with the raw amino-acid sequence, 251 residues long: Aspartate/glutamate leucyltransferase (251 aa).

The protein belongs to the R-transferase family. Bpt subfamily.

The protein localises to the cytoplasm. The enzyme catalyses N-terminal L-glutamyl-[protein] + L-leucyl-tRNA(Leu) = N-terminal L-leucyl-L-glutamyl-[protein] + tRNA(Leu) + H(+). It carries out the reaction N-terminal L-aspartyl-[protein] + L-leucyl-tRNA(Leu) = N-terminal L-leucyl-L-aspartyl-[protein] + tRNA(Leu) + H(+). Its function is as follows. Functions in the N-end rule pathway of protein degradation where it conjugates Leu from its aminoacyl-tRNA to the N-termini of proteins containing an N-terminal aspartate or glutamate. This is Aspartate/glutamate leucyltransferase from Nitrosospira multiformis (strain ATCC 25196 / NCIMB 11849 / C 71).